The primary structure comprises 257 residues: 3-methyl-2-oxobutanoate hydroxymethyltransferase (257 aa).

Positions 42 and 81 each coordinate Mg(2+). Residues 42–43, aspartate 81, and lysine 110 contribute to the 3-methyl-2-oxobutanoate site; that span reads DS. Glutamate 112 provides a ligand contact to Mg(2+). The active-site Proton acceptor is glutamate 176.

This sequence belongs to the PanB family. In terms of assembly, homodecamer; pentamer of dimers. Mg(2+) serves as cofactor.

The protein localises to the cytoplasm. It catalyses the reaction 3-methyl-2-oxobutanoate + (6R)-5,10-methylene-5,6,7,8-tetrahydrofolate + H2O = 2-dehydropantoate + (6S)-5,6,7,8-tetrahydrofolate. It functions in the pathway cofactor biosynthesis; (R)-pantothenate biosynthesis; (R)-pantoate from 3-methyl-2-oxobutanoate: step 1/2. In terms of biological role, catalyzes the reversible reaction in which hydroxymethyl group from 5,10-methylenetetrahydrofolate is transferred onto alpha-ketoisovalerate to form ketopantoate. The polypeptide is 3-methyl-2-oxobutanoate hydroxymethyltransferase (Pelagibacter ubique (strain HTCC1062)).